Here is a 778-residue protein sequence, read N- to C-terminus: MCDTKDDAQKWKCETCTYENYPSSLKCTMCQASKPLLNEDIFRLSPAQESCTVAEEAAAVEVAVMSPTPSSTCYSLQPQSQARQSNVADSEKWPCKVCTYLNWPRSLRCVQCCTKRGGEAIERGKKDMDNEADGDRAGEALQALRISGSEENLANKPVQLIGATASHRLSLSRGIDDATHLNNLANASHNQSQSQHRQPVLQQQMQLQLQPQQQRESSSSAAVPPQQQKQCYVSKWACNSCTYENWPRSIKCSMCGKTREREISGSQNDLHASSSLNSQEENQQQLQQPNVDTVSVNNSFNKKHIYQLGSSETINNCDTLQERQERRQRQIRRQVDWQWLNACLGVVENNYSAVEAYLSCGGNPARSLTSTEIAALNRNSAFDVGHTLIHLAIRFHREEMLPMLLDQISGSGPGIKRVPSYVAPDLAADIRRHFANTLRLRKSGLPCHYVQKHATFALPAEIEELPIPIQEQLYDELLDRDAQKQLETPPPALNWSLEITARLSSRMFVLWNRSAGDCLLDSAMQATWGVFDRDNILRRALADTLHQCGHVFFTRWKEYEMLQASMLHFTLEDSQFEEDWSTLLSLAGQPGSSLEQLHIFALAHILRRPIIVYGVKYVKSFRGEDIGYARFEGVYLPLFWDQNFCTKSPIALGYTRGHFSALVPMEPFTRIDGRRDDVEDVTYLPLMDCELKLLPIHFLTQSEVGNEESMMRQWLDVCVTDGGLLVAQQKLSKRPLLVAQMLEEWLNHYRRIAQVITAPFIRRPQITHYSSDGDSDEE.

RanBP2-type zinc fingers lie at residues 5–36 (KDDAQKWKCETCTYENYPSSLKCTMCQASKPL) and 89–118 (DSEKWPCKVCTYLNWPRSLRCVQCCTKRGG). Polar residues predominate over residues 187–197 (ASHNQSQSQHR). The interval 187 to 226 (ASHNQSQSQHRQPVLQQQMQLQLQPQQQRESSSSAAVPPQ) is disordered. The span at 198-226 (QPVLQQQMQLQLQPQQQRESSSSAAVPPQ) shows a compositional bias: low complexity. Residues 232–261 (YVSKWACNSCTYENWPRSIKCSMCGKTRER) form a RanBP2-type 3 zinc finger. Positions 265 to 290 (GSQNDLHASSSLNSQEENQQQLQQPN) are disordered. Residues 273-288 (SSSLNSQEENQQQLQQ) show a composition bias toward low complexity. The OTU domain occupies 507–665 (MFVLWNRSAG…RGHFSALVPM (159 aa)). Residue cysteine 518 is the Nucleophile of the active site. Histidine 658 acts as the Proton acceptor in catalysis. 3 positions are modified to phosphoserine: serine 770, serine 771, and serine 775.

It belongs to the peptidase C64 family. Interacts with Apc.

The enzyme catalyses Thiol-dependent hydrolysis of ester, thioester, amide, peptide and isopeptide bonds formed by the C-terminal Gly of ubiquitin (a 76-residue protein attached to proteins as an intracellular targeting signal).. Its function is as follows. Positive regulator of the Wnt signaling pathway. Specifically cleaves 'Lys-63'-linked ubiquitin chains. May act by deubiquitinating APC protein, a negative regulator of Wnt-mediated transcription. Required for an efficient wg response, but not for other signaling responses, in the eye. This chain is Ubiquitin thioesterase trabid (trbd), found in Drosophila melanogaster (Fruit fly).